Here is a 1013-residue protein sequence, read N- to C-terminus: Probable beta-galactosidase B (1013 aa).

An N-terminal signal peptide occupies residues Met1–Ala21. Tyr90 is a binding site for substrate. N-linked (GlcNAc...) asparagine glycosylation occurs at Asn100. Residues Asn135, Ala136, Glu137, and Asn195 each contribute to the substrate site. Glu196 functions as the Proton donor in the catalytic mechanism. Asn211 carries N-linked (GlcNAc...) asparagine glycosylation. Tyr265 is a substrate binding site. Cys271 and Cys324 are oxidised to a cystine. Glu308 (nucleophile) is an active-site residue. Tyr373 contributes to the substrate binding site. N-linked (GlcNAc...) asparagine glycosylation is found at Asn411, Asn442, Asn456, Asn626, Asn735, Asn768, and Asn775.

Belongs to the glycosyl hydrolase 35 family.

It localises to the secreted. It carries out the reaction Hydrolysis of terminal non-reducing beta-D-galactose residues in beta-D-galactosides.. Cleaves beta-linked terminal galactosyl residues from gangliosides, glycoproteins, and glycosaminoglycans. This is Probable beta-galactosidase B (lacB) from Penicillium rubens (strain ATCC 28089 / DSM 1075 / NRRL 1951 / Wisconsin 54-1255) (Penicillium chrysogenum).